A 177-amino-acid chain; its full sequence is Small ribosomal subunit protein uS5 (177 aa).

The 64-residue stretch at 14–77 (LQEKLITVNR…EKARHNMIDI (64 aa)) folds into the S5 DRBM domain.

This sequence belongs to the universal ribosomal protein uS5 family. As to quaternary structure, part of the 30S ribosomal subunit. Contacts proteins S4 and S8.

With S4 and S12 plays an important role in translational accuracy. Functionally, located at the back of the 30S subunit body where it stabilizes the conformation of the head with respect to the body. This chain is Small ribosomal subunit protein uS5, found in Blochmanniella floridana.